Here is a 204-residue protein sequence, read N- to C-terminus: uncharacterized protein (204 aa).

The N-terminal stretch at 1–24 is a signal peptide; that stretch reads MPINTFCKISLFICALFCSTVTLA.

This is an uncharacterized protein from Pasteurella multocida (strain Pm70).